The chain runs to 269 residues: 3-methyl-2-oxobutanoate hydroxymethyltransferase (269 aa).

Positions 50 and 89 each coordinate Mg(2+). Residues 50–51 (DS), D89, and K118 contribute to the 3-methyl-2-oxobutanoate site. E120 contacts Mg(2+). E187 acts as the Proton acceptor in catalysis.

This sequence belongs to the PanB family. Homodecamer; pentamer of dimers. Mg(2+) is required as a cofactor.

It is found in the cytoplasm. It catalyses the reaction 3-methyl-2-oxobutanoate + (6R)-5,10-methylene-5,6,7,8-tetrahydrofolate + H2O = 2-dehydropantoate + (6S)-5,6,7,8-tetrahydrofolate. Its pathway is cofactor biosynthesis; (R)-pantothenate biosynthesis; (R)-pantoate from 3-methyl-2-oxobutanoate: step 1/2. Catalyzes the reversible reaction in which hydroxymethyl group from 5,10-methylenetetrahydrofolate is transferred onto alpha-ketoisovalerate to form ketopantoate. The chain is 3-methyl-2-oxobutanoate hydroxymethyltransferase from Nitrosomonas eutropha (strain DSM 101675 / C91 / Nm57).